The following is a 1254-amino-acid chain: Receptor tyrosine-protein kinase erbB-2 (1254 aa).

The first 22 residues, 1–22 (MELAAWCGWGLLLALLSPGASG), serve as a signal peptide directing secretion. At 23 to 652 (TQVCTGTDMK…PAEQRASPAT (630 aa)) the chain is on the extracellular side. A disulfide bridge links Cys-26 with Cys-53. Residues Asn-68, Asn-125, and Asn-187 are each glycosylated (N-linked (GlcNAc...) asparagine). Cystine bridges form between Cys-162–Cys-192, Cys-195–Cys-204, Cys-199–Cys-212, Cys-236–Cys-244, Cys-240–Cys-252, Cys-255–Cys-264, Cys-268–Cys-295, Cys-299–Cys-311, Cys-315–Cys-331, Cys-334–Cys-338, Cys-342–Cys-367, Cys-475–Cys-504, Cys-511–Cys-520, and Cys-515–Cys-528. A glycan (N-linked (GlcNAc...) asparagine) is linked at Asn-259. N-linked (GlcNAc...) asparagine glycosylation occurs at Asn-530. Cystine bridges form between Cys-531–Cys-540, Cys-544–Cys-560, Cys-563–Cys-576, Cys-567–Cys-584, Cys-587–Cys-596, Cys-600–Cys-623, Cys-626–Cys-634, and Cys-630–Cys-642. The N-linked (GlcNAc...) asparagine glycan is linked to Asn-571. Asn-629 carries an N-linked (GlcNAc...) asparagine glycan. Residues 653-675 (SIIATVVGILLFLVIGVVVGILI) form a helical membrane-spanning segment. The interval 676 to 689 (KRRRQKIRKYTMRR) is required for interaction with KPNB1 and EEA1. A Nuclear localization signal motif is present at residues 676–689 (KRRRQKIRKYTMRR). Over 676–1254 (KRRRQKIRKY…PEYLGLDVPV (579 aa)) the chain is Cytoplasmic. The region spanning 720–987 (LRKVKVLGSG…RMARDPQRFV (268 aa)) is the Protein kinase domain. ATP is bound by residues 726–734 (LGSGAFGTV) and Lys-753. Residue Asp-845 is the Proton acceptor of the active site. At Tyr-877 the chain carries Phosphotyrosine. Disordered stretches follow at residues 1029-1116 (GFFF…SEDP) and 1133-1179 (CSPQ…GKNG). A phosphoserine mark is found at Ser-1054, Ser-1078, Ser-1083, and Ser-1107. Phosphotyrosine is present on Tyr-1112. The residue at position 1139 (Tyr-1139) is a Phosphotyrosine; by autocatalysis. The span at 1146-1161 (RPQPPLTPEGPLPPVR) shows a compositional bias: pro residues. Position 1166 is a phosphothreonine (Thr-1166). The segment at 1195-1197 (EYL) is interaction with PIK3C2B. Tyr-1196 is modified (phosphotyrosine). A disordered region spans residues 1223 to 1254 (DQDPSERGSPPNTFEGTPTAENPEYLGLDVPV). Positions 1232–1242 (PPNTFEGTPTA) are enriched in polar residues. At Tyr-1247 the chain carries Phosphotyrosine; by autocatalysis.

The protein belongs to the protein kinase superfamily. Tyr protein kinase family. EGF receptor subfamily. Homodimer. Heterodimer with EGFR, ERBB3 and ERBB4. Part of a complex with EGFR and either PIK3C2A or PIK3C2B. May interact with PIK3C2B when phosphorylated on Tyr-1196. Interacts with PRKCABP and PLXNB1. Interacts (when phosphorylated on Tyr-1247) with MEMO. Interacts with MUC1. Interacts (when phosphorylated on Tyr-1139) with GRB7 (via SH2 domain). Interacts (when phosphorylated on Tyr-1247) with ERBIN. Interacts with SRC, KPNB1, RANBP2, EEA1, CRM1, CLTC, PTK6, RPA194, MYOC and ACTB. Interacts (preferentially with the tyrosine phosphorylated form) with CPNE3; this interaction occurs at the cell membrane and is increased in a growth factor heregulin-dependent manner. Interacts with HSP90AA1 and HSP90AB1 in an ATP-dependent manner; the interaction suppresses ERBB2 kinase activity. Interacts with SORL1; this interaction regulates ERBB2 subcellular distribution by promoting its recycling after internalization from endosomes back to the plasma membrane, hence stimulates ERBB2-mediated signaling. Interacts with SH3BGRL. Interacts with ROR1. Autophosphorylated. Autophosphorylation occurs in trans, i.e. one subunit of the dimeric receptor phosphorylates tyrosine residues on the other subunit. Ligand-binding increases phosphorylation on tyrosine residues. Signaling via SEMA4C promotes phosphorylation at Tyr-1247. Dephosphorylated by PTPN12.

Its subcellular location is the cell membrane. It is found in the cell projection. It localises to the ruffle membrane. The protein resides in the early endosome. The protein localises to the cytoplasm. Its subcellular location is the perinuclear region. It is found in the nucleus. The enzyme catalyses L-tyrosyl-[protein] + ATP = O-phospho-L-tyrosyl-[protein] + ADP + H(+). Functionally, protein tyrosine kinase that is part of several cell surface receptor complexes, but that apparently needs a coreceptor for ligand binding. Essential component of a neuregulin-receptor complex, although neuregulins do not interact with it alone. GP30 is a potential ligand for this receptor. Regulates outgrowth and stabilization of peripheral microtubules (MTs). Upon ERBB2 activation, the MEMO1-RHOA-DIAPH1 signaling pathway elicits the phosphorylation and thus the inhibition of GSK3B at cell membrane. This prevents the phosphorylation of APC and CLASP2, allowing its association with the cell membrane. In turn, membrane-bound APC allows the localization of MACF1 to the cell membrane, which is required for microtubule capture and stabilization. In the nucleus is involved in transcriptional regulation. Associates with the 5'-TCAAATTC-3' sequence in the PTGS2/COX-2 promoter and activates its transcription. Implicated in transcriptional activation of CDKN1A; the function involves STAT3 and SRC. Involved in the transcription of rRNA genes by RNA Pol I and enhances protein synthesis and cell growth. This is Receptor tyrosine-protein kinase erbB-2 (ERBB2) from Mesocricetus auratus (Golden hamster).